The following is a 171-amino-acid chain: Actin-related protein 2/3 complex subunit 4 (171 aa).

The protein belongs to the ARPC4 family. As to quaternary structure, component of the Arp2/3 complex composed of ARP2, ARP3, ARC40/p41-ARC, ARC35/p34-ARC, ARC18/p21-ARC, ARC19/p20-ARC and ARC16/p16-ARC.

The protein localises to the cytoplasm. Its subcellular location is the cytoskeleton. It is found in the actin patch. Functionally, functions as actin-binding component of the Arp2/3 complex which is involved in regulation of actin polymerization and together with an activating nucleation-promoting factor (NPF) mediates the formation of branched actin networks. Seems to contact the mother actin filament. The polypeptide is Actin-related protein 2/3 complex subunit 4 (ARC19) (Saccharomyces cerevisiae (strain ATCC 204508 / S288c) (Baker's yeast)).